The chain runs to 540 residues: Solute carrier family 2, facilitated glucose transporter member 9 (540 aa).

The tract at residues 1–31 (MARKQNRNSKELGLVPLTDDTSHAGPPGPGR) is disordered. The Cytoplasmic portion of the chain corresponds to 1–51 (MARKQNRNSKELGLVPLTDDTSHAGPPGPGRALLECDHLRSGVPGGRRRKD). The residue at position 9 (Ser-9) is a Phosphoserine. Residues 52–72 (WSCSLLVASLAGAFGSSFLYG) traverse the membrane as a helical segment. Topologically, residues 73–107 (YNLSVVNAPTPYIKAFYNESWERRHGRPIDPDTLT) are extracellular. A glycan (N-linked (GlcNAc...) asparagine) is linked at Asn-90. A helical transmembrane segment spans residues 108–128 (LLWSVTVSIFAIGGLVGTLIV). Over 129-140 (KMIGKVLGRKHT) the chain is Cytoplasmic. A helical membrane pass occupies residues 141–161 (LLANNGFAISAALLMACSLQA). The Extracellular segment spans residues 162 to 171 (GAFEMLIVGR). The helical transmembrane segment at 172–192 (FIMGIDGGVALSVLPMYLSEI) threads the bilayer. Over 193–200 (SPKEIRGS) the chain is Cytoplasmic. Residues 201 to 221 (LGQVTAIFICIGVFTGQLLGL) form a helical membrane-spanning segment. Residues 222 to 231 (PELLGKESTW) are Extracellular-facing. The chain crosses the membrane as a helical span at residues 232–252 (PYLFGVIVVPAVVQLLSLPFL). Residues 253–316 (PDSPRYLLLE…LLRAPYVRWQ (64 aa)) lie on the Cytoplasmic side of the membrane. Residues 317–337 (VVTVIVTMACYQLCGLNAIWF) form a helical membrane-spanning segment. Residues 338–354 (YTNSIFGKAGIPPAKIP) are Extracellular-facing. The chain crosses the membrane as a helical span at residues 355–375 (YVTLSTGGIETLAAVFSGLVI). At 376–381 (EHLGRR) the chain is on the cytoplasmic side. The helical transmembrane segment at 382 to 402 (PLLIGGFGLMGLFFGTLTITL) threads the bilayer. The Extracellular segment spans residues 403 to 415 (TLQDHAPWVPYLS). The helical transmembrane segment at 416–436 (IVGILAIIASFCSGPGGIPFI) threads the bilayer. Residues 437-451 (LTGEFFQQSQRPAAF) are Cytoplasmic-facing. Residues 452 to 472 (IIAGTVNWLSNFAVGLLFPFI) traverse the membrane as a helical segment. Residues 473 to 478 (QKSLDT) are Extracellular-facing. Residues 479 to 499 (YCFLVFATICITGAIYLYFVL) traverse the membrane as a helical segment. Over 500-540 (PETKNRTYAEISQAFSKRNKAYPPEEKIDSAVTDGKINGRP) the chain is Cytoplasmic. Residue Ser-515 is modified to Phosphoserine. Residues 519-540 (KAYPPEEKIDSAVTDGKINGRP) form a disordered region.

Belongs to the major facilitator superfamily. Sugar transporter (TC 2.A.1.1) family. Glucose transporter subfamily. Most strongly expressed in basolateral membranes of proximal renal tubular cells, liver and placenta. Also detected in lung, blood leukocytes, heart skeletal muscle and chondrocytes from articular cartilage. Detected in kidney membrane (at protein level). As to expression, only detected in the apical membranes of polarized renal tubular cells and placenta. Detected in kidney membrane (at protein level).

Its subcellular location is the cell membrane. It localises to the basolateral cell membrane. The protein localises to the apical cell membrane. The enzyme catalyses urate(out) = urate(in). Its activity is regulated as follows. Extracellular glucose and urate accelerate urate efflux. Intracellular urate, glucose and fructose accelerate urate influx. With respect to regulation, no effect of extracellular urate, glucose or fructose on urate efflux. Intracellular urate and fructose slightly accelerate urate influx. In terms of biological role, high-capacity urate transporter, which may play a role in the urate reabsorption by proximal tubules. May have a residual high-affinity, low-capacity glucose and fructose transporter activity. Transports urate at rates 45- to 60-fold faster than glucose. Does not transport galactose. May mediate small uptake of adenine but not of other nucleobases. In Homo sapiens (Human), this protein is Solute carrier family 2, facilitated glucose transporter member 9.